A 65-amino-acid chain; its full sequence is METQVKVLVLVGALFINTYTDNYKSVDLTHDSEQAYGFKDKWEAQQVAAKVGGQVVVRTTSFKIV.

This sequence belongs to the phi29likevirus GP5.5 family.

The chain is Gene product 5B (5B) from Bacillus subtilis (Bacteriophage PZA).